Reading from the N-terminus, the 337-residue chain is GTPase Obg (337 aa).

The Obg domain maps to 1–161 (MNLTDNAVIF…FKIKLDFVFL (161 aa)). In terms of domain architecture, OBG-type G spans 162–333 (ADVGLFGYSN…LINKILLFLE (172 aa)). Residues 168 to 175 (GYSNTGRS), 193 to 197 (FTTLF), 214 to 217 (DIPS), 282 to 285 (NKTD), and 314 to 316 (SLN) each bind GTP. The Mg(2+) site is built by S175 and T195.

This sequence belongs to the TRAFAC class OBG-HflX-like GTPase superfamily. OBG GTPase family. In terms of assembly, monomer. Mg(2+) is required as a cofactor.

Its subcellular location is the cytoplasm. Its function is as follows. An essential GTPase which binds GTP, GDP and possibly (p)ppGpp with moderate affinity, with high nucleotide exchange rates and a fairly low GTP hydrolysis rate. Plays a role in control of the cell cycle, stress response, ribosome biogenesis and in those bacteria that undergo differentiation, in morphogenesis control. The sequence is that of GTPase Obg from Wigglesworthia glossinidia brevipalpis.